The primary structure comprises 249 residues: 5'-nucleotidase SurE (249 aa).

The a divalent metal cation site is built by Asp9, Asp10, Ser40, and Asn92.

It belongs to the SurE nucleotidase family. It depends on a divalent metal cation as a cofactor.

The protein localises to the cytoplasm. It carries out the reaction a ribonucleoside 5'-phosphate + H2O = a ribonucleoside + phosphate. In terms of biological role, nucleotidase that shows phosphatase activity on nucleoside 5'-monophosphates. In Shewanella frigidimarina (strain NCIMB 400), this protein is 5'-nucleotidase SurE.